A 639-amino-acid polypeptide reads, in one-letter code: uncharacterized protein (639 aa).

This is an uncharacterized protein from Mus musculus (Mouse).